The following is a 379-amino-acid chain: Protein RecA (379 aa).

79–86 (GPESSGKT) serves as a coordination point for ATP.

It belongs to the RecA family.

It localises to the cytoplasm. Can catalyze the hydrolysis of ATP in the presence of single-stranded DNA, the ATP-dependent uptake of single-stranded DNA by duplex DNA, and the ATP-dependent hybridization of homologous single-stranded DNAs. It interacts with LexA causing its activation and leading to its autocatalytic cleavage. This chain is Protein RecA, found in Streptococcus agalactiae serotype III (strain NEM316).